A 202-amino-acid chain; its full sequence is Recombination protein RecR (202 aa).

The C4-type zinc-finger motif lies at 59–74 (CSVCFHLSAEPVCEIC). The Toprim domain maps to 82-176 (HTICVVADSR…KVTRIAFGLP (95 aa)).

This sequence belongs to the RecR family.

May play a role in DNA repair. It seems to be involved in an RecBC-independent recombinational process of DNA repair. It may act with RecF and RecO. The sequence is that of Recombination protein RecR from Thermosynechococcus vestitus (strain NIES-2133 / IAM M-273 / BP-1).